The following is a 503-amino-acid chain: Protein DETOXIFICATION 36 (503 aa).

Helical transmembrane passes span 54 to 74 (LFHL…MSML), 87 to 107 (LAAA…LMLG), 137 to 157 (IVLV…KPLL), 166 to 186 (VASV…AYAV), 203 to 223 (SAYI…LSVF), 225 to 245 (FGWG…IIVL), 271 to 293 (GLWD…SWYS), 313 to 333 (LAIC…FNAA), 355 to 375 (AVTT…ILSW), 399 to 419 (FLAI…VAVG), 427 to 447 (AYVN…VLGF), and 456 to 476 (IWTG…IVTF).

The protein belongs to the multi antimicrobial extrusion (MATE) (TC 2.A.66.1) family.

Its subcellular location is the membrane. The sequence is that of Protein DETOXIFICATION 36 from Arabidopsis thaliana (Mouse-ear cress).